A 169-amino-acid chain; its full sequence is Large ribosomal subunit protein uL10 (169 aa).

This sequence belongs to the universal ribosomal protein uL10 family. In terms of assembly, part of the ribosomal stalk of the 50S ribosomal subunit. The N-terminus interacts with L11 and the large rRNA to form the base of the stalk. The C-terminus forms an elongated spine to which L12 dimers bind in a sequential fashion forming a multimeric L10(L12)X complex.

Forms part of the ribosomal stalk, playing a central role in the interaction of the ribosome with GTP-bound translation factors. The chain is Large ribosomal subunit protein uL10 from Rickettsia bellii (strain OSU 85-389).